The sequence spans 729 residues: Fatty acid oxidation complex subunit alpha (729 aa).

The enoyl-CoA hydratase/isomerase stretch occupies residues 1-189 (MLYKGDTLYL…KIGLVDGVVK (189 aa)). Aspartate 296 contributes to the substrate binding site. The segment at 311-729 (ETPKQAAVLG…ARPVGSLKTA (419 aa)) is 3-hydroxyacyl-CoA dehydrogenase. NAD(+)-binding positions include methionine 324, aspartate 343, 400–402 (VVE), lysine 407, and serine 429. Catalysis depends on histidine 450, which acts as the For 3-hydroxyacyl-CoA dehydrogenase activity. Asparagine 453 provides a ligand contact to NAD(+). Residues asparagine 500 and tyrosine 660 each contribute to the substrate site. The tract at residues 708-729 (RHNEPYYPPVEPARPVGSLKTA) is disordered.

The protein in the N-terminal section; belongs to the enoyl-CoA hydratase/isomerase family. In the C-terminal section; belongs to the 3-hydroxyacyl-CoA dehydrogenase family. In terms of assembly, heterotetramer of two alpha chains (FadB) and two beta chains (FadA).

It catalyses the reaction a (3S)-3-hydroxyacyl-CoA + NAD(+) = a 3-oxoacyl-CoA + NADH + H(+). The catalysed reaction is a (3S)-3-hydroxyacyl-CoA = a (2E)-enoyl-CoA + H2O. It carries out the reaction a 4-saturated-(3S)-3-hydroxyacyl-CoA = a (3E)-enoyl-CoA + H2O. The enzyme catalyses (3S)-3-hydroxybutanoyl-CoA = (3R)-3-hydroxybutanoyl-CoA. It catalyses the reaction a (3Z)-enoyl-CoA = a 4-saturated (2E)-enoyl-CoA. The catalysed reaction is a (3E)-enoyl-CoA = a 4-saturated (2E)-enoyl-CoA. The protein operates within lipid metabolism; fatty acid beta-oxidation. Its function is as follows. Involved in the aerobic and anaerobic degradation of long-chain fatty acids via beta-oxidation cycle. Catalyzes the formation of 3-oxoacyl-CoA from enoyl-CoA via L-3-hydroxyacyl-CoA. It can also use D-3-hydroxyacyl-CoA and cis-3-enoyl-CoA as substrate. In Salmonella choleraesuis (strain SC-B67), this protein is Fatty acid oxidation complex subunit alpha.